Consider the following 444-residue polypeptide: MEFPDIHAYNSTKYLEDGDTTILGDTIQFQFIYENIDNKEHISLPKIKIFKYFRDKISFETLDRIIKNDYINPSYFQLKDKKFCAHNRDFYHLSTGGYGIIFRMEKYVVKFVFEDGSKKYKPMEVTSEFTIPRFLYNNLKGDERKFIVCAIAMGINFKIDFLRTIYYNTMSLMSALFNIMEGEPLENKYSHRKVLRYFAKYKQSNDFVKLISQFYPYVVNSNINVINNFNYLINFFERSRRSNGYFNRGNIIIFPLAKCSAEKITPDNYAQYGFSSIVEYTKFMFLQIALLYIKIYELPCSNFVHLDLKPDNILIFDSKEPINIYVGDMHYVFKEPIRCTLNDFDFSQISEIIPNKKAVTAINKEQNWYYDFHFFSHVLFKVYPEISKDEDFTSLLNEFTICDKYICENFRLQVNKLPSISFLINIVSRDIFSKWIDGKSTSHQ.

The Protein kinase domain maps to 87-444 (NRDFYHLSTG…WIDGKSTSHQ (358 aa)). Residues 93-101 (LSTGGYGII) and Lys-118 each bind ATP. The active-site Proton acceptor is the Asp-307.

Belongs to the protein kinase superfamily. Ser/Thr protein kinase family. Poxviruses subfamily. Phosphorylated in vivo. Autophosphorylated in vitro.

Its subcellular location is the host endoplasmic reticulum. The protein resides in the host endoplasmic reticulum-Golgi intermediate compartment. It catalyses the reaction L-seryl-[protein] + ATP = O-phospho-L-seryl-[protein] + ADP + H(+). It carries out the reaction L-threonyl-[protein] + ATP = O-phospho-L-threonyl-[protein] + ADP + H(+). In terms of biological role, essential serine-protein kinase involved in the early stage of virion morphogenesis. This chain is Serine/threonine-protein kinase 2 (OPG054), found in Vertebrata (FPV).